A 149-amino-acid polypeptide reads, in one-letter code: Large ribosomal subunit protein bL9 (149 aa).

Belongs to the bacterial ribosomal protein bL9 family.

Binds to the 23S rRNA. In Stenotrophomonas maltophilia (strain K279a), this protein is Large ribosomal subunit protein bL9.